Reading from the N-terminus, the 321-residue chain is Gap junction delta-2 protein (321 aa).

Residues 1 to 19 (MGEWTILERLLEAAVQQHS) are Cytoplasmic-facing. The helical transmembrane segment at 20-42 (TMIGRILLTVVVIFRILIVAIVG) threads the bilayer. At 43-75 (ETVYDDEQTMFVCNTLQPGCNQACYDRAFPISH) the chain is on the extracellular side. Residues 76–98 (IRYWVFQIIMVCTPSLCFITYSV) traverse the membrane as a helical segment. The Cytoplasmic segment spans residues 99-197 (HQSAKQRERR…KLRRQEGISR (99 aa)). The segment at 117-141 (DRDPPESMGGPGGTGGGGSGGGKRE) is disordered. Gly residues predominate over residues 125 to 137 (GGPGGTGGGGSGG). A helical transmembrane segment spans residues 198 to 220 (FYIIQVVFRNALEIGFLVGQYFL). The Extracellular portion of the chain corresponds to 221–252 (YGFSVPGLYECDRYPCIKEVECYVSRPTEKTV). A helical transmembrane segment spans residues 253–275 (FLVFMFAVSGICVVLNLAELNHL). The Cytoplasmic segment spans residues 276–321 (GWRKIKLAVRGAQAKRKSVYEIRNKDLPRVSVPNFGRTQSSDSAYV).

The protein belongs to the connexin family. Delta-type subfamily. In terms of assembly, a connexon is composed of a hexamer of connexins.

It localises to the cell membrane. Its subcellular location is the cell junction. It is found in the gap junction. Its function is as follows. One gap junction consists of a cluster of closely packed pairs of transmembrane channels, the connexons, through which materials of low MW diffuse from one cell to a neighboring cell. The sequence is that of Gap junction delta-2 protein (GJD2) from Bos taurus (Bovine).